The sequence spans 234 residues: Orofacial cleft 1 candidate gene 1 protein homolog (234 aa).

Disordered stretches follow at residues 1 to 21 (MEKEKFQQKALKQTKQKKSKS) and 201 to 234 (SKHHKEASHHNKKNCNPGFMSSFKDREASRWQQR). A compositionally biased stretch (basic residues) spans 202–213 (KHHKEASHHNKK). Residues 223 to 234 (FKDREASRWQQR) are compositionally biased toward basic and acidic residues.

In Gallus gallus (Chicken), this protein is Orofacial cleft 1 candidate gene 1 protein homolog (OFCC1).